The chain runs to 575 residues: Phosphoenolpyruvate-protein phosphotransferase (575 aa).

The active-site Tele-phosphohistidine intermediate is His-189. Phosphoenolpyruvate contacts are provided by Arg-296 and Arg-332. Residues Glu-431 and Asp-455 each contribute to the Mg(2+) site. Phosphoenolpyruvate is bound by residues 454-455 (ND) and Arg-465. The active-site Proton donor is the Cys-502.

It belongs to the PEP-utilizing enzyme family. As to quaternary structure, homodimer. It depends on Mg(2+) as a cofactor.

It is found in the cytoplasm. It catalyses the reaction L-histidyl-[protein] + phosphoenolpyruvate = N(pros)-phospho-L-histidyl-[protein] + pyruvate. Functionally, general (non sugar-specific) component of the phosphoenolpyruvate-dependent sugar phosphotransferase system (sugar PTS). This major carbohydrate active-transport system catalyzes the phosphorylation of incoming sugar substrates concomitantly with their translocation across the cell membrane. Enzyme I transfers the phosphoryl group from phosphoenolpyruvate (PEP) to the phosphoryl carrier protein (HPr). The polypeptide is Phosphoenolpyruvate-protein phosphotransferase (ptsI) (Haemophilus influenzae (strain ATCC 51907 / DSM 11121 / KW20 / Rd)).